A 107-amino-acid polypeptide reads, in one-letter code: Colipase (107 aa).

A signal peptide spans 1–17 (MEKVLVLLLVALSVAYA). The propeptide at 18-22 (APGPR) is enterostatin, activation peptide. Intrachain disulfides connect Cys-34–Cys-45, Cys-40–Cys-56, Cys-44–Cys-78, Cys-66–Cys-86, and Cys-80–Cys-104.

The protein belongs to the colipase family. As to quaternary structure, forms a 1:1 stoichiometric complex with pancreatic lipase. Expressed by the pancreas.

The protein resides in the secreted. Colipase is a cofactor of pancreatic lipase. It allows the lipase to anchor itself to the lipid-water interface. Without colipase the enzyme is washed off by bile salts, which have an inhibitory effect on the lipase. Functionally, enterostatin has a biological activity as a satiety signal. In Oryctolagus cuniculus (Rabbit), this protein is Colipase (CLPS).